A 475-amino-acid polypeptide reads, in one-letter code: Ribulose bisphosphate carboxylase large chain (475 aa).

Positions 1–2 (MA) are excised as a propeptide. The residue at position 3 (Pro3) is an N-acetylproline. At Lys14 the chain carries N6,N6,N6-trimethyllysine. Substrate contacts are provided by Asn123 and Thr173. The Proton acceptor role is filled by Lys175. Lys177 contacts substrate. Lys201, Asp203, and Glu204 together coordinate Mg(2+). Lys201 bears the N6-carboxylysine mark. Residue His294 is the Proton acceptor of the active site. The substrate site is built by Arg295, His327, and Ser379.

This sequence belongs to the RuBisCO large chain family. Type I subfamily. As to quaternary structure, heterohexadecamer of 8 large chains and 8 small chains; disulfide-linked. The disulfide link is formed within the large subunit homodimers. The cofactor is Mg(2+). In terms of processing, the disulfide bond which can form in the large chain dimeric partners within the hexadecamer appears to be associated with oxidative stress and protein turnover.

The protein localises to the plastid. The protein resides in the chloroplast. The enzyme catalyses 2 (2R)-3-phosphoglycerate + 2 H(+) = D-ribulose 1,5-bisphosphate + CO2 + H2O. The catalysed reaction is D-ribulose 1,5-bisphosphate + O2 = 2-phosphoglycolate + (2R)-3-phosphoglycerate + 2 H(+). Functionally, ruBisCO catalyzes two reactions: the carboxylation of D-ribulose 1,5-bisphosphate, the primary event in carbon dioxide fixation, as well as the oxidative fragmentation of the pentose substrate in the photorespiration process. Both reactions occur simultaneously and in competition at the same active site. This Oedogonium cardiacum (Filamentous green alga) protein is Ribulose bisphosphate carboxylase large chain.